Here is a 120-residue protein sequence, read N- to C-terminus: Ribosome-binding factor A (120 aa).

The protein belongs to the RbfA family. Monomer. Binds 30S ribosomal subunits, but not 50S ribosomal subunits or 70S ribosomes.

It is found in the cytoplasm. Functionally, one of several proteins that assist in the late maturation steps of the functional core of the 30S ribosomal subunit. Associates with free 30S ribosomal subunits (but not with 30S subunits that are part of 70S ribosomes or polysomes). Required for efficient processing of 16S rRNA. May interact with the 5'-terminal helix region of 16S rRNA. This Campylobacter jejuni subsp. jejuni serotype O:6 (strain 81116 / NCTC 11828) protein is Ribosome-binding factor A.